The primary structure comprises 349 residues: Probable protease SohB (349 aa).

Residues 1-8 are Periplasmic-facing; that stretch reads MELLSEYG. Residues 9–29 form a helical membrane-spanning segment; sequence LFLAKIVTVVLAIAAIAAIIV. Residues 30-349 lie on the Cytoplasmic side of the membrane; sequence NVAQRNKRQR…WWQRGQKPLM (320 aa). Ser-178 serves as the catalytic Nucleophile. Lys-230 functions as the Proton donor/acceptor in the catalytic mechanism.

Belongs to the peptidase S49 family.

It localises to the cell inner membrane. Its function is as follows. Multicopy suppressor of the HtrA (DegP) null phenotype. It is possibly a protease, not essential for bacterial viability. This chain is Probable protease SohB (sohB), found in Escherichia coli (strain K12).